Consider the following 264-residue polypeptide: MDIVHIIVLSLVQGITEFLPISSSAHLVLVPKLLGWPDQGLAFDVAVHIGTLTAIVFYFKDSIFGLLRDFFVSIVRRERVGDSTLVWAVCFATIPAGIFGLAFNSLIEEYTRSGIVIAVTTIIFGVVLYLADKRVGTKSEYDVTIKLALIIGLAQALALIPGVSRSGITMSAALFLGFSRVGSANFSFLMSIPIILLAGGLESVKLIRHDISYVWSDLALAALISAVSAYICVKLFMSIISKMSMTPFVVYRLILGVFLLFIFV.

8 consecutive transmembrane segments (helical) span residues 1–21 (MDIVHIIVLSLVQGITEFLPI), 39–59 (QGLAFDVAVHIGTLTAIVFYF), 83–103 (STLVWAVCFATIPAGIFGLAF), 113–133 (SGIVIAVTTIIFGVVLYLADK), 143–163 (VTIKLALIIGLAQALALIPGV), 181–201 (VGSANFSFLMSIPIILLAGGL), 220–240 (LAALISAVSAYICVKLFMSII), and 244–264 (SMTPFVVYRLILGVFLLFIFV).

This sequence belongs to the UppP family.

It is found in the cell inner membrane. The catalysed reaction is di-trans,octa-cis-undecaprenyl diphosphate + H2O = di-trans,octa-cis-undecaprenyl phosphate + phosphate + H(+). Its function is as follows. Catalyzes the dephosphorylation of undecaprenyl diphosphate (UPP). Confers resistance to bacitracin. The protein is Undecaprenyl-diphosphatase of Campylobacter curvus (strain 525.92).